The following is a 569-amino-acid chain: ABC1 family protein MCP2 (569 aa).

Residues 1–18 (MMTKAFFNKLPFEVFRRY) constitute a mitochondrion transit peptide. Topologically, residues 19 to 34 (VRTGKSIPQRSPRTRK) are mitochondrial matrix. The chain crosses the membrane as a helical span at residues 35–51 (SLLVGGTIASAVVLYNF). The Mitochondrial intermembrane portion of the chain corresponds to 52–569 (NDTFHDSVKH…KFIPKTWLSS (518 aa)).

It belongs to the protein kinase superfamily. ADCK protein kinase family.

The protein localises to the mitochondrion. It localises to the mitochondrion inner membrane. Functionally, component of MIOREX complexes, large expressome-like assemblies of ribosomes with factors involved in all the steps of post-transcriptional gene expression. Involved in mitochondrial lipid homeostasis. The protein is ABC1 family protein MCP2 of Saccharomyces cerevisiae (strain ATCC 204508 / S288c) (Baker's yeast).